The following is a 772-amino-acid chain: Mitochondrial intermediate peptidase (772 aa).

The N-terminal 42 residues, 1–42 (MFANSARNALKKRPQNLQPFRFQGCLFSKRANRPLTTKVQHL), are a transit peptide targeting the mitochondrion. His556 is a Zn(2+) binding site. Glu557 is a catalytic residue. His560 and His563 together coordinate Zn(2+).

Belongs to the peptidase M3 family. The cofactor is Zn(2+).

The protein localises to the mitochondrion matrix. The catalysed reaction is Release of an N-terminal octapeptide as second stage of processing of some proteins imported into the mitochondrion.. In terms of biological role, cleaves proteins, imported into the mitochondrion, to their mature size. While most mitochondrial precursor proteins are processed to the mature form in one step by mitochondrial processing peptidase (MPP), the sequential cleavage by MIP of an octapeptide after initial processing by MPP is a required step for a subgroup of nuclear-encoded precursor proteins destined for the matrix or the inner membrane. The sequence is that of Mitochondrial intermediate peptidase (OCT1) from Laccaria bicolor (strain S238N-H82 / ATCC MYA-4686) (Bicoloured deceiver).